The sequence spans 121 residues: Prismalin-14 (121 aa).

The signal sequence occupies residues 1 to 16 (MRSLLVLLALAACASA). Position 17 is a pyrrolidone carboxylic acid (glutamine 17). 4 consecutive repeat copies span residues 48–51 (PIYR), 52–55 (PIYR), 56–59 (PIYY), and 60–63 (PQII). Positions 48-63 (PIYRPIYRPIYYPQII) are 4 X 4 AA approximate tandem repeats of P-I-Y-R.

As to expression, expressed only at the mantle edge where it is found predominantly in the inner side of the outer mantle fold.

Functionally, displays inhibitory activity against calcium carbonate precipitation, binds calcium and affects crystallization of calcium carbonate in vitro. May be involved in calcification of the prismatic layer of the shell. This chain is Prismalin-14, found in Pinctada fucata (Akoya pearl oyster).